The primary structure comprises 157 residues: uncharacterized protein (157 aa).

Positions 3–157 (FTLEDMTEEE…TNIRMRKQLC (155 aa)) constitute an N-acetyltransferase domain.

It belongs to the acetyltransferase family.

This is an uncharacterized protein from Bacillus subtilis (strain 168).